The sequence spans 660 residues: Translation factor GUF1 homolog, mitochondrial (660 aa).

A tr-type G domain is found at E62 to T243. GTP is bound by residues A71 to S78, D136 to H140, and N190 to D193.

It belongs to the TRAFAC class translation factor GTPase superfamily. Classic translation factor GTPase family. LepA subfamily.

The protein resides in the mitochondrion inner membrane. It catalyses the reaction GTP + H2O = GDP + phosphate + H(+). Functionally, promotes mitochondrial protein synthesis. May act as a fidelity factor of the translation reaction, by catalyzing a one-codon backward translocation of tRNAs on improperly translocated ribosomes. Binds to mitochondrial ribosomes in a GTP-dependent manner. This Trichoplax adhaerens (Trichoplax reptans) protein is Translation factor GUF1 homolog, mitochondrial.